A 184-amino-acid chain; its full sequence is Peptide deformylase (184 aa).

Fe cation contacts are provided by C98 and H140. The active site involves E141. H144 is a Fe cation binding site.

This sequence belongs to the polypeptide deformylase family. Fe(2+) serves as cofactor.

It carries out the reaction N-terminal N-formyl-L-methionyl-[peptide] + H2O = N-terminal L-methionyl-[peptide] + formate. Its function is as follows. Removes the formyl group from the N-terminal Met of newly synthesized proteins. Requires at least a dipeptide for an efficient rate of reaction. N-terminal L-methionine is a prerequisite for activity but the enzyme has broad specificity at other positions. The polypeptide is Peptide deformylase (Bacteroides fragilis (strain ATCC 25285 / DSM 2151 / CCUG 4856 / JCM 11019 / LMG 10263 / NCTC 9343 / Onslow / VPI 2553 / EN-2)).